A 158-amino-acid chain; its full sequence is Cathelicidin-6 (158 aa).

A signal peptide spans 1-29; that stretch reads METQRASLSLGRWSLWLLLLGLALPSASA. The propeptide occupies 30-131; it reads QALSYREAVL…NVTCEELQSV (102 aa). 2 disulfides stabilise this stretch: Cys86-Cys97 and Cys108-Cys125.

It belongs to the cathelicidin family.

It localises to the secreted. Its function is as follows. Exerts a potent antimicrobial activity against Gram-negative and Gram-positive bacteria, including methicillin-resistant Staphylococcus aureus, and fungi. The polypeptide is Cathelicidin-6 (CATHL6) (Bos taurus (Bovine)).